A 122-amino-acid chain; its full sequence is UPF0102 protein BQ09720 (122 aa).

The protein belongs to the UPF0102 family.

The sequence is that of UPF0102 protein BQ09720 from Bartonella quintana (strain Toulouse) (Rochalimaea quintana).